Consider the following 453-residue polypeptide: Adenosylmethionine-8-amino-7-oxononanoate aminotransferase (453 aa).

118–119 (GA) serves as a coordination point for pyridoxal 5'-phosphate. Substrate is bound at residue Y151. D257 contacts pyridoxal 5'-phosphate. Residues K286, G321, and R416 each coordinate substrate. The residue at position 286 (K286) is an N6-(pyridoxal phosphate)lysine.

The protein belongs to the class-III pyridoxal-phosphate-dependent aminotransferase family. BioA subfamily. As to quaternary structure, homodimer. The cofactor is pyridoxal 5'-phosphate.

The protein resides in the cytoplasm. The catalysed reaction is (8S)-8-amino-7-oxononanoate + S-adenosyl-L-methionine = S-adenosyl-4-methylsulfanyl-2-oxobutanoate + (7R,8S)-7,8-diammoniononanoate. The protein operates within cofactor biosynthesis; biotin biosynthesis; 7,8-diaminononanoate from 8-amino-7-oxononanoate (SAM route): step 1/1. Catalyzes the transfer of the alpha-amino group from S-adenosyl-L-methionine (SAM) to 7-keto-8-aminopelargonic acid (KAPA) to form 7,8-diaminopelargonic acid (DAPA). It is the only aminotransferase known to utilize SAM as an amino donor. The sequence is that of Adenosylmethionine-8-amino-7-oxononanoate aminotransferase from Aquifex aeolicus (strain VF5).